The sequence spans 88 residues: Small ribosomal subunit protein bS18 (88 aa).

Over residues 1 to 11 (MTTANTTAKDN) the composition is skewed to low complexity. The segment at 1–21 (MTTANTTAKDNAATKKRGRKA) is disordered.

The protein belongs to the bacterial ribosomal protein bS18 family. As to quaternary structure, part of the 30S ribosomal subunit. Forms a tight heterodimer with protein bS6.

Functionally, binds as a heterodimer with protein bS6 to the central domain of the 16S rRNA, where it helps stabilize the platform of the 30S subunit. This chain is Small ribosomal subunit protein bS18, found in Thermoanaerobacter pseudethanolicus (strain ATCC 33223 / 39E) (Clostridium thermohydrosulfuricum).